Here is an 873-residue protein sequence, read N- to C-terminus: MGLKARRAAGAAGGGGGEGGGGGGGAANPAGGDSAVAGDEERKVGLAPGDVEQVTLALGAGADKDGTLLLEGGGREEGQRRTPQGIGLLAKTPLSRPVKRNNAKYRRIQTLIYDALERPRGWALLYHALVFLIVLGCLILAVLTTFKEYETVSGDWLLLLETFAIFIFGAEFALRIWAAGCCCRYKGWRGRLKFARKPLCMLDIFVLIASVPVVAVGNQGNVLATSLRSLRFLQILRMLRMDRRGGTWKLLGSAICAHSKELITAWYIGFLTLILSSFLVYLVEKDVPEMDAQGEEMKEEFETYADALWWGLITLATIGYGDKTPKTWEGRLIAATFSLIGVSFFALPAGILGSGLALKVQEQHRQKHFEKRRKPAAELIQAAWRYYATNPNRLDLVATWRFYESVVSFPFFRKEQLEAAASQKLGLLDRVRLSNPRGSNTKGKLFTPLNVDAIEESPSKEPKPVGLNNKERFRTAFRMKAYAFWQSSEDAGTGDPMAEDRGYGNDFLIEDMIPTLKAAIRAVRILQFRLYKKKFKETLRPYDVKDVIEQYSAGHLDMLSRIKYLQTRIDMIFTPGPPSTPKHKKSQKGSAFTYPSQQSPRNEPYVARAATSETEDQSMMGKFVKVERQVHDMGKKLDFLVDMHMQHMERLQVHVTEYYPTKGASSPAEGEKKEDNRYSDLKTIICNYSETGPPDPPYSFHQVPIDRVGPYGFFAHDPVKLTRGGPSSTKAQANLPSSGSTYAERPTVLPILTLLDSCVSYHSQTELQGPYSDHISPRQRRSITRDSDTPLSLMSVNHEELERSPSGFSISQDRDDYVFGPSGGSSWMREKRYLAEGETDTDTDPFTPSGSMPMSSTGDGISDSIWTPSNKPT.

Residues 1 to 41 are disordered; that stretch reads MGLKARRAAGAAGGGGGEGGGGGGGAANPAGGDSAVAGDEE. Residues 1-121 are Cytoplasmic-facing; sequence MGLKARRAAG…IYDALERPRG (121 aa). Over residues 11 to 26 the composition is skewed to gly residues; sequence AAGGGGGEGGGGGGGA. Position 82 is a phosphothreonine (Thr-82). A helical membrane pass occupies residues 122 to 144; sequence WALLYHALVFLIVLGCLILAVLT. Residues 145-154 lie on the Extracellular side of the membrane; sequence TFKEYETVSG. The chain crosses the membrane as a helical span at residues 155-176; that stretch reads DWLLLLETFAIFIFGAEFALRI. Residues 177–194 are Cytoplasmic-facing; the sequence is WAAGCCCRYKGWRGRLKF. A helical membrane pass occupies residues 195–214; that stretch reads ARKPLCMLDIFVLIASVPVV. Over 215 to 226 the chain is Extracellular; it reads AVGNQGNVLATS. A helical; Voltage-sensor membrane pass occupies residues 227 to 245; sequence LRSLRFLQILRMLRMDRRG. Arg-244 is a binding site for a 1,2-diacyl-sn-glycero-3-phospho-(1D-myo-inositol-4,5-bisphosphate). The Cytoplasmic portion of the chain corresponds to 246–257; it reads GTWKLLGSAICA. A helical membrane pass occupies residues 258–283; it reads HSKELITAWYIGFLTLILSSFLVYLV. An a 1,2-diacyl-sn-glycero-3-phospho-(1D-myo-inositol-4,5-bisphosphate)-binding site is contributed by Lys-260. Residues 284 to 303 lie on the Extracellular side of the membrane; it reads EKDVPEMDAQGEEMKEEFET. Positions 304–316 form an intramembrane region, pore-forming; it reads YADALWWGLITLA. The Selectivity filter signature appears at 317–322; the sequence is TIGYGD. Residues 317–327 are Extracellular-facing; sequence TIGYGDKTPKT. Residues 328-354 traverse the membrane as a helical segment; sequence WEGRLIAATFSLIGVSFFALPAGILGS. Topologically, residues 355–873 are cytoplasmic; it reads GLALKVQEQH…SIWTPSNKPT (519 aa). The segment at 357-538 is mediates interaction with calmodulin; sequence ALKVQEQHRQ…RLYKKKFKET (182 aa). Lys-367 is a binding site for a 1,2-diacyl-sn-glycero-3-phospho-(1D-myo-inositol-4,5-bisphosphate). Disordered regions lie at residues 575 to 603, 723 to 742, and 766 to 873; these read PGPP…PRNE, RGGP…GSTY, and ELQG…NKPT. Polar residues-rich tracts occupy residues 588–601, 725–741, and 844–873; these read KGSA…QSPR, GPSS…SGST, and DPFT…NKPT.

This sequence belongs to the potassium channel family. KQT (TC 1.A.1.15) subfamily. Kv7.3/KCNQ3 sub-subfamily. In terms of assembly, heterotetramer with KCNQ2; forms heterotetrameric native M-channel responsible for the M-current. Interacts with calmodulin; the interaction is calcium-independent, constitutive and participates in the proper assembly of a functional M-channel. Heteromultimer with KCNQ5. May associate with KCNE2. Interacts with IQCJ-SCHIP1. Interacts (via the pore module) with SLC5A3/SMIT1; forms a coregulatory complex that alters ion selectivity, voltage dependence and gating kinetics of the channel. KCNQ2/KCNQ3 are ubiquitinated by NEDD4L. Ubiquitination leads to protein degradation. Degradation induced by NEDD4L is inhibited by USP36. In terms of tissue distribution, expressed in dorsal root ganglion (DRG) neurons.

It is found in the cell membrane. The catalysed reaction is K(+)(in) = K(+)(out). The enzyme catalyses Rb(+)(in) = Rb(+)(out). It catalyses the reaction Cs(+)(in) = Cs(+)(out). It carries out the reaction Na(+)(in) = Na(+)(out). Phosphatidylinositol-4,5-bisphosphate (PIP2) potentiates the activation of KCNQ channels by enhancing the electro-mechanical coupling of the voltage-sensing domain (VSD) and the pore-forming domain (PD). In the closed state of the channel, PIP2 is anchored at the S2-S3 loop; upon channel activation, PIP2 interacts with the S4-S5 linker and is involved in channel gating. Calcium suppresses KCNQ2-KCNQ3 channel currents, with calcium-bound calmodulin inducing a change in channel configuration which leads to the reduction of channel affinity for PIP2 and subsequent current suppression. In terms of biological role, pore-forming subunit of the voltage-gated potassium (Kv) M-channel which is responsible for the M-current, a key controller of neuronal excitability. M-channel is composed of pore-forming subunits KCNQ2 and KCNQ3 assembled as heterotetramers. The native M-current has a slowly activating and deactivating potassium conductance which plays a critical role in determining the subthreshold electrical excitability of neurons as well as the responsiveness to synaptic inputs. M-channel is selectively permeable in vitro to other cations besides potassium, in decreasing order of affinity K(+) &gt; Rb(+) &gt; Cs(+) &gt; Na(+). M-channel association with SLC5A3/SMIT1 alters channel ion selectivity, increasing Na(+) and Cs(+) permeation relative to K(+). Suppressed by activation of M1 muscarinic acetylcholine receptors. KCNQ3 also associates with KCNQ5 to form a functional channel in vitro and may also contribute to the M-current in brain. The protein is Potassium voltage-gated channel subfamily KQT member 3 of Mus musculus (Mouse).